Consider the following 152-residue polypeptide: NADH-quinone oxidoreductase subunit I 1 (152 aa).

4Fe-4S ferredoxin-type domains are found at residues Met-53 to Asp-83 and Val-94 to Gly-123. 8 residues coordinate [4Fe-4S] cluster: Cys-63, Cys-66, Cys-69, Cys-73, Cys-103, Cys-106, Cys-109, and Cys-113.

The protein belongs to the complex I 23 kDa subunit family. In terms of assembly, NDH-1 is composed of 14 different subunits. Subunits NuoA, H, J, K, L, M, N constitute the membrane sector of the complex. It depends on [4Fe-4S] cluster as a cofactor.

Its subcellular location is the cell inner membrane. It catalyses the reaction a quinone + NADH + 5 H(+)(in) = a quinol + NAD(+) + 4 H(+)(out). NDH-1 shuttles electrons from NADH, via FMN and iron-sulfur (Fe-S) centers, to quinones in the respiratory chain. The immediate electron acceptor for the enzyme in this species is believed to be ubiquinone. Couples the redox reaction to proton translocation (for every two electrons transferred, four hydrogen ions are translocated across the cytoplasmic membrane), and thus conserves the redox energy in a proton gradient. In Koribacter versatilis (strain Ellin345), this protein is NADH-quinone oxidoreductase subunit I 1.